The chain runs to 837 residues: Protein translocase subunit SecA (837 aa).

ATP is bound by residues Gln85, 103–107, and Asp493; that span reads GEGKT. Cys821, Cys823, Cys832, and His833 together coordinate Zn(2+).

Belongs to the SecA family. In terms of assembly, monomer and homodimer. Part of the essential Sec protein translocation apparatus which comprises SecA, SecYEG and auxiliary proteins SecDF. Other proteins may also be involved. It depends on Zn(2+) as a cofactor.

The protein resides in the cell membrane. Its subcellular location is the cytoplasm. The enzyme catalyses ATP + H2O + cellular proteinSide 1 = ADP + phosphate + cellular proteinSide 2.. Part of the Sec protein translocase complex. Interacts with the SecYEG preprotein conducting channel. Has a central role in coupling the hydrolysis of ATP to the transfer of proteins into and across the cell membrane, serving as an ATP-driven molecular motor driving the stepwise translocation of polypeptide chains across the membrane. This is Protein translocase subunit SecA from Streptococcus pneumoniae serotype 2 (strain D39 / NCTC 7466).